The chain runs to 252 residues: 3-dehydroquinate dehydratase (252 aa).

Residues 47–49 and R83 contribute to the 3-dehydroquinate site; that span reads EWR. The Proton donor/acceptor role is filled by H144. K171 functions as the Schiff-base intermediate with substrate in the catalytic mechanism. Residues R213, S232, and Q236 each coordinate 3-dehydroquinate.

Belongs to the type-I 3-dehydroquinase family. Homodimer.

The catalysed reaction is 3-dehydroquinate = 3-dehydroshikimate + H2O. The protein operates within metabolic intermediate biosynthesis; chorismate biosynthesis; chorismate from D-erythrose 4-phosphate and phosphoenolpyruvate: step 3/7. Its function is as follows. Involved in the third step of the chorismate pathway, which leads to the biosynthesis of aromatic amino acids. Catalyzes the cis-dehydration of 3-dehydroquinate (DHQ) and introduces the first double bond of the aromatic ring to yield 3-dehydroshikimate. This is 3-dehydroquinate dehydratase from Lactiplantibacillus plantarum (strain ATCC BAA-793 / NCIMB 8826 / WCFS1) (Lactobacillus plantarum).